Reading from the N-terminus, the 129-residue chain is Small ribosomal subunit protein uS11 (129 aa).

It belongs to the universal ribosomal protein uS11 family. Part of the 30S ribosomal subunit. Interacts with proteins S7 and S18. Binds to IF-3.

Its function is as follows. Located on the platform of the 30S subunit, it bridges several disparate RNA helices of the 16S rRNA. Forms part of the Shine-Dalgarno cleft in the 70S ribosome. The protein is Small ribosomal subunit protein uS11 of Aromatoleum aromaticum (strain DSM 19018 / LMG 30748 / EbN1) (Azoarcus sp. (strain EbN1)).